The primary structure comprises 353 residues: Photosystem II protein D1 (353 aa).

The residue at position 2 (Thr2) is an N-acetylthreonine. Residue Thr2 is modified to Phosphothreonine. The next 3 helical transmembrane spans lie at 29–46 (YIGW…TATS), 118–133 (HFLL…EWEL), and 142–156 (WIAV…AATA). Residue His118 participates in chlorophyll a binding. Tyr126 lines the pheophytin a pocket. Residues Asp170 and Glu189 each contribute to the [CaMn4O5] cluster site. Residues 197 to 218 (FHMLGVAGVFGGSLFSAMHGSL) traverse the membrane as a helical segment. Position 198 (His198) interacts with chlorophyll a. Residues His215 and 264-265 (SF) contribute to the a quinone site. His215 contributes to the Fe cation binding site. His272 contacts Fe cation. The helical transmembrane segment at 274–288 (FLAAWPVVGIWFTSL) threads the bilayer. Residues His332, Glu333, Asp342, and Ala344 each contribute to the [CaMn4O5] cluster site. The propeptide occupies 345 to 353 (AIDAPSVNG).

The protein belongs to the reaction center PufL/M/PsbA/D family. As to quaternary structure, PSII is composed of 1 copy each of membrane proteins PsbA, PsbB, PsbC, PsbD, PsbE, PsbF, PsbH, PsbI, PsbJ, PsbK, PsbL, PsbM, PsbT, PsbX, PsbY, PsbZ, Psb30/Ycf12, at least 3 peripheral proteins of the oxygen-evolving complex and a large number of cofactors. It forms dimeric complexes. The D1/D2 heterodimer binds P680, chlorophylls that are the primary electron donor of PSII, and subsequent electron acceptors. It shares a non-heme iron and each subunit binds pheophytin, quinone, additional chlorophylls, carotenoids and lipids. D1 provides most of the ligands for the Mn4-Ca-O5 cluster of the oxygen-evolving complex (OEC). There is also a Cl(-1) ion associated with D1 and D2, which is required for oxygen evolution. The PSII complex binds additional chlorophylls, carotenoids and specific lipids. serves as cofactor. Post-translationally, tyr-161 forms a radical intermediate that is referred to as redox-active TyrZ, YZ or Y-Z. In terms of processing, C-terminally processed by CTPA; processing is essential to allow assembly of the oxygen-evolving complex and thus photosynthetic growth.

Its subcellular location is the plastid. It is found in the chloroplast thylakoid membrane. It carries out the reaction 2 a plastoquinone + 4 hnu + 2 H2O = 2 a plastoquinol + O2. Its function is as follows. Photosystem II (PSII) is a light-driven water:plastoquinone oxidoreductase that uses light energy to abstract electrons from H(2)O, generating O(2) and a proton gradient subsequently used for ATP formation. It consists of a core antenna complex that captures photons, and an electron transfer chain that converts photonic excitation into a charge separation. The D1/D2 (PsbA/PsbD) reaction center heterodimer binds P680, the primary electron donor of PSII as well as several subsequent electron acceptors. The sequence is that of Photosystem II protein D1 from Coffea arabica (Arabian coffee).